The primary structure comprises 310 residues: Porphobilinogen deaminase (310 aa).

The residue at position 242 (cysteine 242) is an S-(dipyrrolylmethanemethyl)cysteine.

This sequence belongs to the HMBS family. In terms of assembly, monomer. The cofactor is dipyrromethane.

It carries out the reaction 4 porphobilinogen + H2O = hydroxymethylbilane + 4 NH4(+). The protein operates within porphyrin-containing compound metabolism; protoporphyrin-IX biosynthesis; coproporphyrinogen-III from 5-aminolevulinate: step 2/4. Tetrapolymerization of the monopyrrole PBG into the hydroxymethylbilane pre-uroporphyrinogen in several discrete steps. This chain is Porphobilinogen deaminase, found in Shewanella baltica (strain OS223).